The chain runs to 177 residues: B9 domain-containing protein 2 (177 aa).

In terms of domain architecture, C2 B9-type spans Ala-2–Asn-118.

Belongs to the B9D family. In terms of assembly, probable component of the tectonic-like complex (also named MKS complex), composed of B9d1, B9d2, Cc2d2a, Mks1 and tctn. As to expression, expressed in chordotonal neurons in the antennae (at protein level). Expressed in spermatids (at protein level).

The protein resides in the cytoplasm. The protein localises to the cytoskeleton. Its subcellular location is the cilium basal body. Its function is as follows. Probable component of the tectonic-like complex (also named MKS complex), a complex localized at the transition zone of primary cilia. Has a role in ciliary structure and function. This chain is B9 domain-containing protein 2, found in Drosophila melanogaster (Fruit fly).